A 726-amino-acid chain; its full sequence is Probable dipeptidyl-peptidase 5 (726 aa).

A signal peptide spans 1–19 (MAAAKWLIASLAFASSGLA). N-linked (GlcNAc...) asparagine glycans are attached at residues asparagine 96 and asparagine 252. Residues 269–291 (AEPINKRNGPRTPQGIEGASSSP) form a disordered region. Residue asparagine 485 is glycosylated (N-linked (GlcNAc...) asparagine). The active-site Charge relay system is the serine 558. Asparagine 605 carries N-linked (GlcNAc...) asparagine glycosylation. Catalysis depends on charge relay system residues aspartate 641 and histidine 673. Asparagine 699 is a glycosylation site (N-linked (GlcNAc...) asparagine).

The protein belongs to the peptidase S9C family.

It localises to the secreted. Its function is as follows. Extracellular dipeptidyl-peptidase which removes N-terminal dipeptides sequentially from polypeptides having unsubstituted N-termini. Contributes to pathogenicity. The polypeptide is Probable dipeptidyl-peptidase 5 (DPP5) (Arthroderma benhamiae (strain ATCC MYA-4681 / CBS 112371) (Trichophyton mentagrophytes)).